We begin with the raw amino-acid sequence, 554 residues long: GPI alpha-1,2-mannosyltransferase 3 (554 aa).

The N-linked (GlcNAc...) asparagine glycan is linked to N26. 9 helical membrane-spanning segments follow: residues 63 to 83, 136 to 156, 192 to 212, 224 to 244, 255 to 275, 315 to 335, 340 to 360, 362 to 382, and 387 to 407; these read LLLF…TSFV, VQLL…VADV, LTNT…PLEG, LVAL…PLLF, DLIL…SLMI, GFPV…YLAP, ILLV…HKEF, FIYP…THLK, and PALS…GLVH. N-linked (GlcNAc...) asparagine glycosylation is present at N427.

Belongs to the glycosyltransferase 22 family. PIGB subfamily.

The protein resides in the endoplasmic reticulum membrane. It functions in the pathway glycolipid biosynthesis; glycosylphosphatidylinositol-anchor biosynthesis. Alpha-1,2-mannosyltransferase that catalyzes the transfer of the third mannose, via an alpha-1,2 bond, from a dolichol-phosphate-mannose (Dol-P-Man) to an alpha-D-Man-(1-&gt;6)-2-PEtn-alpha-D-Man-(1-&gt;4)-alpha-D-GlcN-(1-&gt;6)-(1-radyl,2-acyl-sn-glycero-3-phospho)-2-acyl-inositol intermediate to generate an alpha-D-Man-(1-&gt;2)-alpha-D-Man-(1-&gt;6)-2-PEtn-alpha-D-Man-(1-&gt;4)-alpha-D-GlcN-(1-&gt;6)-(1-radyl,2-acyl-sn-glycero-3-phospho)-2-acyl-inositol (also termed H6) and participates in the nineth step of the glycosylphosphatidylinositol-anchor biosynthesis. May also add the third mannose to an alpha-D-Man-(1-&gt;6)-alpha-D-Man-(1-&gt;4)-alpha-D-GlcN-(1-&gt;6)-(1-radyl,2-acyl-sn-glycero-3-phospho)-2-acyl-inositol (also termed H3) intermediate generating an alpha-D-Man-(1-&gt;2)-alpha-D-Man-(1-&gt;6)-alpha-D-Man-(1-&gt;4)-alpha-D-GlcN-(1-&gt;6)-(1-radyl,2-acyl-sn-glycero-3-phospho)-2-acyl-inositol (also termed H4). This chain is GPI alpha-1,2-mannosyltransferase 3, found in Homo sapiens (Human).